The primary structure comprises 215 residues: MKFFIDTAEIEEIRQANLRGWVDGVTTNPSLIAKSGKDFHTVIKEICKEITGPVSAEVISLQHEEMVREGKELAKLASNVVVKIPMCEDGMIAVKKLKSEGIKTNVTLVFSPMQALLAAKAGATMVSPFVGRLDDIGVEGMQMVDQVIQMYRNYDFETEVLVASVRSPMHIQLAAEMGADIATIPFKVMQSMTHHPLTDKGIKMFMDDWNKAQKK.

Lys83 functions as the Schiff-base intermediate with substrate in the catalytic mechanism.

Belongs to the transaldolase family. Type 3B subfamily.

It is found in the cytoplasm. It catalyses the reaction D-sedoheptulose 7-phosphate + D-glyceraldehyde 3-phosphate = D-erythrose 4-phosphate + beta-D-fructose 6-phosphate. It participates in carbohydrate degradation; pentose phosphate pathway; D-glyceraldehyde 3-phosphate and beta-D-fructose 6-phosphate from D-ribose 5-phosphate and D-xylulose 5-phosphate (non-oxidative stage): step 2/3. In terms of biological role, transaldolase is important for the balance of metabolites in the pentose-phosphate pathway. This is Probable transaldolase from Bdellovibrio bacteriovorus (strain ATCC 15356 / DSM 50701 / NCIMB 9529 / HD100).